Consider the following 206-residue polypeptide: Small ribosomal subunit protein uS4 (206 aa).

The segment at 29-52 (LDKRPYAPGQHGQRRGRGRPSDYS) is disordered. The region spanning 96-171 (RRLDNVVFRM…QKRRRVSPWV (76 aa)) is the S4 RNA-binding domain.

Belongs to the universal ribosomal protein uS4 family. Part of the 30S ribosomal subunit. Contacts protein S5. The interaction surface between S4 and S5 is involved in control of translational fidelity.

Its function is as follows. One of the primary rRNA binding proteins, it binds directly to 16S rRNA where it nucleates assembly of the body of the 30S subunit. Functionally, with S5 and S12 plays an important role in translational accuracy. This chain is Small ribosomal subunit protein uS4, found in Deinococcus deserti (strain DSM 17065 / CIP 109153 / LMG 22923 / VCD115).